The sequence spans 536 residues: Caspase recruitment domain-containing protein 9 (536 aa).

Ser-2 is subject to Phosphoserine. Zn(2+)-binding residues include Asp-3, Cys-10, and His-73. One can recognise a CARD domain in the interval 6–98 (NDDECWSTLE…QLYRKVTGKE (93 aa)). The linker stretch occupies residues 99–116 (PARVFSMIIDASGESGLT). A coiled-coil region spans residues 117-272 (QLLMTEVMKL…ELQVSVQEGK (156 aa)). Lys-125 participates in a covalent cross-link: Glycyl lysine isopeptide (Lys-Gly) (interchain with G-Cter in ubiquitin). Residue Thr-231 is modified to Phosphothreonine; by PKC/PRKCD. Ser-277 is subject to Phosphoserine. A coiled-coil region spans residues 303-415 (SLRKDLRQAE…LLAAEGRLKQ (113 aa)). Phosphoserine occurs at positions 424, 425, 431, 451, 461, 483, and 498. A disordered region spans residues 425 to 451 (SDLEDSSPRNSQELSLPQDLEEDAQLS). The interval 476 to 536 (LTHGMGPSSS…GSDNTDTEGS (61 aa)) is disordered. Over residues 487–502 (PPEKERRRLKESFENY) the composition is skewed to basic and acidic residues. 2 positions are modified to phosphothreonine; by CK2: Thr-531 and Thr-533.

In terms of assembly, monomer. Homodimer; homodimerization is mediated by the CARD domain which forms an extensive interaction with the adjacent linker and coiled-coil regions; leads to an autoinhibited state. Homomultimer; polymerizes following activation, forming a nucleating helical template that seeds BCL10-filament formation via a CARD-CARD interaction. Interacts (via CARD domain) with BCL10 (via CARD domain); interaction takes place following CARD9 activation and polymerization, leading to the formation of a filamentous CBM complex assembly. Component of a CBM complex (CARD9-BCL10, MALT1), composed of CARD9, BCL10 and MALT1. Interacts with RASGRF1. Interacts with NOD2 (via NACHT domain); interaction is direct. Interacts with RIPK2. Interacts with VHL; without leading to protein degradation. Post-translationally, phosphorylated at Thr-231 by PRKCD downstream of C-type lectin receptors activation: phosphorylation promotes interaction with BCL10, followed by activation of NF-kappa-B and MAP kinase p38 pathways. Phosphorylated at Thr-531 and Thr-531 by CK2 following interaction with VHL, leading to inhibit the ability to activate NF-kappa-B. In terms of processing, ubiquitinated at Lys-125 via 'Lys-27'-linked ubiquitin by TRIM62 downstream of C-type lectin receptors activation; leading to CARD9 activation, followed by activation of NF-kappa-B and MAP kinase p38 pathways. Deubiquitinated at Lys-125 by USP15, inhibiting CARD9. As to expression, specifically expressed in myeloid cells. Not expressed in non-lymphoid organs.

Its subcellular location is the cytoplasm. Its activity is regulated as follows. Maintained in an autoinhibited state via homodimerization in which the CARD domain forms an extensive interaction with the adjacent linker and coiled-coil regions. Activation downstream of C-type lectin receptors, by phosphorylation by PRKCD and/or ubiquitination by TRIM62, triggers disruption of the CARD domain-coiled coil interface, CARD9 homooligomerization and BCL10 recruitment, followed by activation of NF-kappa-B and MAP kinase p38 pathways. Zinc-binding inhibits activation by stabilizing the CARD ground-state conformation and restricting its capacity to form BCL10-nucleating filaments. Functionally, adapter protein that plays a key role in innate immune response against fungi by forming signaling complexes downstream of C-type lectin receptors. CARD9-mediated signals are essential for antifungal immunity against a subset of fungi from the phylum Ascomycota. Transduces signals in myeloid cells downstream of C-type lectin receptors CLEC7A (dectin-1), CLEC6A (dectin-2) and CLEC4E (Mincle), which detect pathogen-associated molecular pattern metabolites (PAMPs), such as fungal carbohydrates, and trigger CARD9 activation. Upon activation, CARD9 homooligomerizes to form a nucleating helical template that recruits BCL10 via CARD-CARD interaction, thereby promoting polymerization of BCL10 and subsequent recruitment of MALT1: this leads to activation of NF-kappa-B and MAP kinase p38 (MAPK11, MAPK12, MAPK13 and/or MAPK14) pathways which stimulate expression of genes encoding pro-inflammatory cytokines and chemokines. CARD9 signaling in antigen-presenting cells links innate sensing of fungi to the activation of adaptive immunity and provides a cytokine milieu that induces the development and subsequent of interleukin 17-producing T helper (Th17) cells. Also involved in activation of myeloid cells via classical ITAM-associated receptors and TLR: required for TLR-mediated activation of MAPK, while it is not required for TLR-induced activation of NF-kappa-B. CARD9 can also be engaged independently of BCL10: forms a complex with RASGRF1 downstream of C-type lectin receptors, which recruits and activates HRAS, leading to ERK activation and the production of cytokines. Acts as an important regulator of the intestinal commensal fungi (mycobiota) component of the gut microbiota. Plays an essential role in antifungal immunity against dissemination of gut fungi: acts by promoting induction of antifungal IgG antibodies response in CX3CR1(+) macrophages to confer protection against disseminated C.albicans or C.auris infection. Also mediates immunity against other pathogens, such as certain bacteria, viruses and parasites; CARD9 signaling is however redundant with other innate immune responses. In response to L.monocytogenes infection, required for the production of inflammatory cytokines activated by intracellular peptidoglycan: acts by connecting NOD2 recognition of peptidoglycan to downstream activation of MAP kinases (MAPK) without activating NF-kappa-B. In Mus musculus (Mouse), this protein is Caspase recruitment domain-containing protein 9.